Here is a 411-residue protein sequence, read N- to C-terminus: MSKPLLDKTLFKKTLDVVGVRVEAKKIGRVVKKLHGHLLNLPRLRNVVPDPTNPDPYKNSSSKLILLNSKVKDMETLQPLNEDLVAFLKEESLAFVSHAIELDYSYFAVDQVLSELLPKGMDIPSSFETVGHIAHLNLRDNQLPFKNVIGQVILDKNAQIRTVVNKTDNIETKFRTFPMEVLAGDDDMEVEVHESKASFRFNYAEVYWNSRLQQEHLRIIRQIKPHDVVCDMMCGIGPFAVPVALNGSKVYANDLNPRSYHYLKENIALNKVEKLVTAYNLDGRDFLAKLLSEKKQFTQVLMNLPAIALEFLDAFPGQFDHWEGELPFVHCYCFSNADDVKQDVKQRAEKIMGGELDPERTSFHLVRDVAPKKVMVCISFQLPESIAFSSERQASKQDDPKRRKVAAENAA.

Residues His216, 254-255, 282-283, and Asn303 each bind S-adenosyl-L-methionine; these read DL and DG. The segment at 391–411 is disordered; that stretch reads ERQASKQDDPKRRKVAAENAA.

It belongs to the class I-like SAM-binding methyltransferase superfamily. TRM5/TYW2 family. Monomer.

The protein resides in the mitochondrion matrix. The protein localises to the nucleus. Its subcellular location is the cytoplasm. The catalysed reaction is guanosine(37) in tRNA + S-adenosyl-L-methionine = N(1)-methylguanosine(37) in tRNA + S-adenosyl-L-homocysteine + H(+). Functionally, specifically methylates the N1 position of guanosine-37 in various cytoplasmic and mitochondrial tRNAs. Methylation is not dependent on the nature of the nucleoside 5' of the target nucleoside. This is the first step in the biosynthesis of wybutosine (yW), a modified base adjacent to the anticodon of tRNAs and required for accurate decoding. The polypeptide is tRNA (guanine(37)-N(1))-methyltransferase (Phytophthora infestans (strain T30-4) (Potato late blight agent)).